A 157-amino-acid polypeptide reads, in one-letter code: RNA-binding protein 3 (157 aa).

The RRM domain occupies 6–84 (GKLFVGGLNF…RQIRVDHAGK (79 aa)). An Omega-N-methylarginine modification is found at arginine 47. The tract at residues 81-157 (HAGKSARGTR…GGNYRDNYDN (77 aa)) is disordered. Arginine 105 is subject to Asymmetric dimethylarginine; alternate. Arginine 105 is modified (dimethylated arginine; in A2780 ovarian carcinoma cell line). Omega-N-methylarginine; alternate is present on arginine 105. Residues 105–114 (RGGGDQGYGS) show a composition bias toward gly residues. Arginine 121 and arginine 131 each carry omega-N-methylarginine. Residue serine 147 is modified to Phosphoserine. Tyrosine 155 carries the phosphotyrosine modification.

Interacts with RPL4. Associates with the 60S ribosomal subunits in an RNA-independent manner. Associates with ribosomes. Arg-105 is dimethylated, probably to asymmetric dimethylarginine. In terms of processing, phosphorylated.

The protein resides in the nucleus. The protein localises to the cytoplasm. It localises to the cell projection. It is found in the dendrite. Its function is as follows. Cold-inducible mRNA binding protein that enhances global protein synthesis at both physiological and mild hypothermic temperatures. Reduces the relative abundance of microRNAs, when overexpressed. Enhances phosphorylation of translation initiation factors and active polysome formation. This chain is RNA-binding protein 3 (RBM3), found in Homo sapiens (Human).